The following is a 320-amino-acid chain: MVKNIGVLTSGGDAPGMNAAVRAVVRTALHYDVGVYGIYNGYLGLYRNEIQPMTRRSVADTINRGGTFLGSARFPEFKEEAVREEAIKNLRKHEIDALVVVGGDGSYMGAKKLTEMGFPCIGLPGTIDNDVAGTDYTIGYFTALNTVLDALDRLRDTSSSHKRISVVEIMGRHCGDLTVWSAIGSGAEYAIVPEMPFDEDKFLEQLRDQVGHGKNHAIVCITEKITDVNRLAKRIEQETGLETRATVLGHIQRGGAPTAFDRILASRMGAYAVELLRQGYGGRCVGIQANELVHHDIIDALENMSRPFKDCLLDLAHRLA.

Position 12 (G12) interacts with ATP. 22 to 26 is a binding site for ADP; that stretch reads RAVVR. Residues 73 to 74 and 103 to 106 each bind ATP; these read RF and GDGS. D104 is a Mg(2+) binding site. Position 126–128 (126–128) interacts with substrate; it reads TID. D128 functions as the Proton acceptor in the catalytic mechanism. Residue R155 coordinates ADP. Substrate is bound by residues R163 and 170–172; that span reads MGR. ADP contacts are provided by residues 186–188 and 214–216; these read GAE and KNH. Residues E223, R244, and 250-253 contribute to the substrate site; that span reads HIQR.

Belongs to the phosphofructokinase type A (PFKA) family. ATP-dependent PFK group I subfamily. Prokaryotic clade 'B1' sub-subfamily. Homotetramer. It depends on Mg(2+) as a cofactor.

The protein localises to the cytoplasm. It carries out the reaction beta-D-fructose 6-phosphate + ATP = beta-D-fructose 1,6-bisphosphate + ADP + H(+). It participates in carbohydrate degradation; glycolysis; D-glyceraldehyde 3-phosphate and glycerone phosphate from D-glucose: step 3/4. With respect to regulation, allosterically activated by ADP and other diphosphonucleosides, and allosterically inhibited by phosphoenolpyruvate. Its function is as follows. Catalyzes the phosphorylation of D-fructose 6-phosphate to fructose 1,6-bisphosphate by ATP, the first committing step of glycolysis. The polypeptide is ATP-dependent 6-phosphofructokinase (Teredinibacter turnerae (strain ATCC 39867 / T7901)).